We begin with the raw amino-acid sequence, 164 residues long: Peptidyl-prolyl cis-trans isomerase A-like 4G (164 aa).

Positions 7-163 (FFDITVDGKP…KKITIADCGQ (157 aa)) constitute a PPIase cyclophilin-type domain.

Belongs to the cyclophilin-type PPIase family. PPIase A subfamily.

It localises to the cytoplasm. The catalysed reaction is [protein]-peptidylproline (omega=180) = [protein]-peptidylproline (omega=0). PPIases accelerate the folding of proteins. It catalyzes the cis-trans isomerization of proline imidic peptide bonds in oligopeptides. The protein is Peptidyl-prolyl cis-trans isomerase A-like 4G (PPIAL4G) of Homo sapiens (Human).